We begin with the raw amino-acid sequence, 437 residues long: AA9 family lytic polysaccharide monooxygenase H (437 aa).

The N-terminal stretch at 1 to 21 (MNLSLFTLALVACYSSQLAAA) is a signal peptide. Position 22 (histidine 22) interacts with Cu(2+). Cysteine 64 and cysteine 193 are joined by a disulfide. N-linked (GlcNAc...) asparagine glycans are attached at residues asparagine 67 and asparagine 79. Histidine 104 is a Cu(2+) binding site. Asparagine 120 and asparagine 138 each carry an N-linked (GlcNAc...) asparagine glycan. O2-binding residues include histidine 178 and glutamine 188. Tyrosine 190 contacts Cu(2+). Residues asparagine 252 and asparagine 307 are each glycosylated (N-linked (GlcNAc...) asparagine). In terms of domain architecture, Chitin-binding type-1 spans 392 to 437 (DGKCGDGNGQTCKGSLLGECCSQVGYCGSSESYCGVGCQGNFGVCG). Cystine bridges form between cysteine 395-cysteine 412, cysteine 403-cysteine 418, cysteine 411-cysteine 425, and cysteine 429-cysteine 436.

This sequence belongs to the polysaccharide monooxygenase AA9 family. The cofactor is Cu(2+).

It is found in the secreted. The enzyme catalyses [(1-&gt;4)-beta-D-glucosyl]n+m + reduced acceptor + O2 = 4-dehydro-beta-D-glucosyl-[(1-&gt;4)-beta-D-glucosyl]n-1 + [(1-&gt;4)-beta-D-glucosyl]m + acceptor + H2O.. Functionally, lytic polysaccharide monooxygenase (LPMO) that depolymerizes crystalline and amorphous polysaccharides via the oxidation of scissile alpha- or beta-(1-4)-glycosidic bonds, yielding C1 and C4 oxidation products. Catalysis by LPMOs requires the reduction of the active-site copper from Cu(II) to Cu(I) by a reducing agent and H(2)O(2) or O(2) as a cosubstrate. This chain is AA9 family lytic polysaccharide monooxygenase H, found in Botryotinia fuckeliana (strain B05.10) (Noble rot fungus).